Consider the following 156-residue polypeptide: 6,7-dimethyl-8-ribityllumazine synthase (156 aa).

5-amino-6-(D-ribitylamino)uracil contacts are provided by residues phenylalanine 23, 57 to 59 (AYE), and 81 to 83 (AVI). A (2S)-2-hydroxy-3-oxobutyl phosphate-binding site is contributed by 86–87 (ST). Catalysis depends on histidine 89, which acts as the Proton donor. Phenylalanine 114 is a 5-amino-6-(D-ribitylamino)uracil binding site. Position 128 (arginine 128) interacts with (2S)-2-hydroxy-3-oxobutyl phosphate.

This sequence belongs to the DMRL synthase family.

The enzyme catalyses (2S)-2-hydroxy-3-oxobutyl phosphate + 5-amino-6-(D-ribitylamino)uracil = 6,7-dimethyl-8-(1-D-ribityl)lumazine + phosphate + 2 H2O + H(+). It functions in the pathway cofactor biosynthesis; riboflavin biosynthesis; riboflavin from 2-hydroxy-3-oxobutyl phosphate and 5-amino-6-(D-ribitylamino)uracil: step 1/2. Catalyzes the formation of 6,7-dimethyl-8-ribityllumazine by condensation of 5-amino-6-(D-ribitylamino)uracil with 3,4-dihydroxy-2-butanone 4-phosphate. This is the penultimate step in the biosynthesis of riboflavin. The chain is 6,7-dimethyl-8-ribityllumazine synthase from Helicobacter hepaticus (strain ATCC 51449 / 3B1).